A 283-amino-acid chain; its full sequence is Bifunctional protein FolD (283 aa).

Residues 166–168 (GAS) and Ile232 each bind NADP(+).

Belongs to the tetrahydrofolate dehydrogenase/cyclohydrolase family. In terms of assembly, homodimer.

It carries out the reaction (6R)-5,10-methylene-5,6,7,8-tetrahydrofolate + NADP(+) = (6R)-5,10-methenyltetrahydrofolate + NADPH. The enzyme catalyses (6R)-5,10-methenyltetrahydrofolate + H2O = (6R)-10-formyltetrahydrofolate + H(+). It participates in one-carbon metabolism; tetrahydrofolate interconversion. Its function is as follows. Catalyzes the oxidation of 5,10-methylenetetrahydrofolate to 5,10-methenyltetrahydrofolate and then the hydrolysis of 5,10-methenyltetrahydrofolate to 10-formyltetrahydrofolate. This is Bifunctional protein FolD from Mannheimia succiniciproducens (strain KCTC 0769BP / MBEL55E).